Consider the following 186-residue polypeptide: Potassium-transporting ATPase KdpC subunit 1 (186 aa).

Residues leucine 10–glycine 30 form a helical membrane-spanning segment.

This sequence belongs to the KdpC family. The system is composed of three essential subunits: KdpA, KdpB and KdpC.

The protein resides in the cell membrane. In terms of biological role, part of the high-affinity ATP-driven potassium transport (or Kdp) system, which catalyzes the hydrolysis of ATP coupled with the electrogenic transport of potassium into the cytoplasm. This subunit acts as a catalytic chaperone that increases the ATP-binding affinity of the ATP-hydrolyzing subunit KdpB by the formation of a transient KdpB/KdpC/ATP ternary complex. The protein is Potassium-transporting ATPase KdpC subunit 1 of Staphylococcus aureus (strain Mu50 / ATCC 700699).